A 1312-amino-acid chain; its full sequence is Probable histone-lysine N-methyltransferase lin-59 (1312 aa).

Polar residues-rich tracts occupy residues 1-11 (MHGAGEQQQRY) and 25-36 (STSSHQYQQQGA). 5 disordered regions span residues 1–41 (MHGA…QMHQ), 54–81 (TTTSAAASTSSSGGSNSSGGSGGHRQQG), 154–223 (QPSG…KPVD), 312–435 (EESK…PPPV), and 524–556 (KDNIKKEVKEESTPPPTKLRGRLPSRRTREPSE). Positions 54-68 (TTTSAAASTSSSGGS) are enriched in low complexity. Gly residues predominate over residues 69–78 (NSSGGSGGHR). Positions 160-176 (PMSSNAPATTSSATPDS) are enriched in low complexity. The span at 200–210 (DHDDEEDDDGP) shows a compositional bias: acidic residues. Basic and acidic residues predominate over residues 312–321 (EESKKKKDME). The segment covering 344–367 (ATRSTNSPDVTTSNLPEEPSTSTM) has biased composition (polar residues). The span at 371–382 (KENEDVEKVEGK) shows a compositional bias: basic and acidic residues. A compositionally biased stretch (basic residues) spans 383–394 (RRGRKPKKRRGF). 2 stretches are compositionally biased toward basic and acidic residues: residues 395 to 419 (HKESFEDLESDAKKSKAEQHEDHLP) and 524 to 535 (KDNIKKEVKEES). The AWS domain maps to 590–635 (APSLTCGCTKGACTSDMDCLNRALRVQCSSDCSVPYCSNRRFWKED). An SET domain is found at 638 to 750 (NKLCVSNGPR…PNAEITVDKS (113 aa)). The tract at residues 913–934 (DNAPRARALSTSCPSPVPSKRG) is disordered. A PHD-type zinc finger spans residues 967–1027 (AVRCICGALD…EYICDFCTNK (61 aa)). A BAH domain is found at 1100 to 1223 (NKYRFPKAAT…KTQRVFEKVP (124 aa)). Residues 1248-1295 (RDFRPYDPSNPSPKPPKTSSIPSTSSIDPPQSSSDGLPEVDTKKLSKR) form a disordered region. The span at 1264-1281 (KTSSIPSTSSIDPPQSSS) shows a compositional bias: low complexity.

This sequence belongs to the class V-like SAM-binding methyltransferase superfamily. Histone-lysine methyltransferase family. SET2 subfamily. Widely expressed throughout embryonic development and into adulthood.

Its subcellular location is the nucleus. The enzyme catalyses L-lysyl-[histone] + S-adenosyl-L-methionine = N(6)-methyl-L-lysyl-[histone] + S-adenosyl-L-homocysteine + H(+). Its function is as follows. Probable histone methyltransferase. Essential protein required to maintain expression of homeotic genes egl-5 and mab-5. May play an analogous role to the trithorax Group (trxG) proteins. TrxG proteins form multiprotein complexes that are required to maintain the transcriptionally active state of homeotic genes throughout development. May act via a modification of chromatin. In Caenorhabditis elegans, this protein is Probable histone-lysine N-methyltransferase lin-59 (lin-59).